A 109-amino-acid chain; its full sequence is Cell division suppressor protein YneA (109 aa).

The 55-residue stretch at 40–94 folds into the LysM domain; that stretch reads STVTITKGDTLWELSNKYHNHHHLTTNEFVKWVEDVNDLNSDTAQSLSPGDKLYI.

This sequence belongs to the YneA family.

It is found in the cytoplasm. In terms of biological role, inhibits cell division during the SOS response. Affects a later stage of the cell division protein assembly, after the assembly of the Z ring, by probably suppressing recruitment of FtsL and/or DivIC to the division machinery. The sequence is that of Cell division suppressor protein YneA from Priestia megaterium (strain DSM 319 / IMG 1521) (Bacillus megaterium).